The primary structure comprises 189 residues: Glycerol-3-phosphate acyltransferase (189 aa).

4 consecutive transmembrane segments (helical) span residues Met1 to Leu21, Leu77 to Phe97, Met111 to Phe131, and Leu151 to Val171.

This sequence belongs to the PlsY family. As to quaternary structure, probably interacts with PlsX.

It localises to the cell inner membrane. The catalysed reaction is an acyl phosphate + sn-glycerol 3-phosphate = a 1-acyl-sn-glycero-3-phosphate + phosphate. It functions in the pathway lipid metabolism; phospholipid metabolism. Its function is as follows. Catalyzes the transfer of an acyl group from acyl-phosphate (acyl-PO(4)) to glycerol-3-phosphate (G3P) to form lysophosphatidic acid (LPA). This enzyme utilizes acyl-phosphate as fatty acyl donor, but not acyl-CoA or acyl-ACP. In Pseudomonas putida (strain W619), this protein is Glycerol-3-phosphate acyltransferase.